The primary structure comprises 683 residues: Translation factor guf1, mitochondrial (683 aa).

A mitochondrion-targeting transit peptide spans Met1–Ala43. The region spanning Glu66–Val250 is the tr-type G domain. GTP is bound by residues Ala75 to Ser82, Asp139 to His143, and Asn193 to Asp196.

The protein belongs to the TRAFAC class translation factor GTPase superfamily. Classic translation factor GTPase family. LepA subfamily.

The protein localises to the mitochondrion inner membrane. The enzyme catalyses GTP + H2O = GDP + phosphate + H(+). In terms of biological role, promotes mitochondrial protein synthesis. May act as a fidelity factor of the translation reaction, by catalyzing a one-codon backward translocation of tRNAs on improperly translocated ribosomes. Binds to mitochondrial ribosomes in a GTP-dependent manner. In Neosartorya fischeri (strain ATCC 1020 / DSM 3700 / CBS 544.65 / FGSC A1164 / JCM 1740 / NRRL 181 / WB 181) (Aspergillus fischerianus), this protein is Translation factor guf1, mitochondrial (guf1).